The chain runs to 248 residues: MSVTMREMLEAGCHFGHQTRFWNPKMAPFIFGHRNKIHIINLEKTLPMFQDAMKYVRQLAANRGTILFVGTKRQSREILAEEAGRAGMPYVDARWLGGMLTNFKTVKTSIKRLKDMEAAKEAGALETMSKKEALMFEREMLKLEKSIGGIKDMGGVPDAIFVVDVGYHKIAVTEANKLGVPVIGVVDTNHSPEGIDYVIPGNDDSSKAVALYVRGVADAILEGRANAVQEVVEAARGGDDEFVEVQEG.

Belongs to the universal ribosomal protein uS2 family.

In Cupriavidus necator (strain ATCC 17699 / DSM 428 / KCTC 22496 / NCIMB 10442 / H16 / Stanier 337) (Ralstonia eutropha), this protein is Small ribosomal subunit protein uS2.